The chain runs to 733 residues: N-alpha-acetyltransferase 35, NatC auxiliary subunit (733 aa).

Belongs to the MAK10 family. Component of the N-terminal acetyltransferase C (NatC) complex, which is composed of MAK3, MAK10 and MAK31.

The protein resides in the cytoplasm. Functionally, component of the NatC N-terminal acetyltransferase, which catalyzes acetylation of the N-terminus Met of L-A virus Gag protein. MAK10 has a role in the propagation of L-A and M viruses, perhaps in the viral assembly. It is apparently directly needed for optimum respiration. The polypeptide is N-alpha-acetyltransferase 35, NatC auxiliary subunit (MAK10) (Saccharomyces cerevisiae (strain ATCC 204508 / S288c) (Baker's yeast)).